The sequence spans 210 residues: MPNFSYEDSFSHGSNAIVVGVDEVGYGSIAGPVVAAAVYIPDRNVECIPNIKDSKLLTPKKRDALYKELLSHTVCGTGLASIDEIEEHNILVASHMAMRRALENLNLQRIDLVLVDGSRELKSQWPSKSIINGDELSISIAAASIVAKVTRDNMMRELHDQYPEYHWNKNCGYGTAAHILALKQHGATPLHRKTFAPVKKCIISTKNQDK.

The 192-residue stretch at 16–207 folds into the RNase H type-2 domain; sequence AIVVGVDEVG…VKKCIISTKN (192 aa). The a divalent metal cation site is built by Asp-22, Glu-23, and Asp-116.

The protein belongs to the RNase HII family. Requires Mn(2+) as cofactor. The cofactor is Mg(2+).

The protein resides in the cytoplasm. The catalysed reaction is Endonucleolytic cleavage to 5'-phosphomonoester.. Its function is as follows. Endonuclease that specifically degrades the RNA of RNA-DNA hybrids. The polypeptide is Ribonuclease HII (Anaplasma phagocytophilum (strain HZ)).